A 245-amino-acid polypeptide reads, in one-letter code: 8-amino-3,8-dideoxy-manno-octulosonate cytidylyltransferase (245 aa).

Belongs to the KdsB family.

The protein resides in the cytoplasm. It carries out the reaction 8-amino-3,8-dideoxy-alpha-D-manno-octulosonate + CTP = CMP-8-amino-3,8-dideoxy-alpha-D-manno-oct-2-ulosonate + diphosphate. The protein operates within bacterial outer membrane biogenesis; lipopolysaccharide biosynthesis. Activates KDO8N (a required 8-carbon sugar) for incorporation into bacterial lipopolysaccharide in the Shewanella genus. The polypeptide is 8-amino-3,8-dideoxy-manno-octulosonate cytidylyltransferase (Shewanella piezotolerans (strain WP3 / JCM 13877)).